The chain runs to 206 residues: Protein YmaB (206 aa).

The polypeptide is Protein YmaB (ymaB) (Bacillus subtilis (strain 168)).